The sequence spans 302 residues: 4-hydroxy-tetrahydrodipicolinate synthase (302 aa).

Threonine 49 serves as a coordination point for pyruvate. Residue tyrosine 137 is the Proton donor/acceptor of the active site. The active-site Schiff-base intermediate with substrate is the lysine 166. Isoleucine 208 contributes to the pyruvate binding site.

This sequence belongs to the DapA family. Homotetramer; dimer of dimers.

It is found in the cytoplasm. It carries out the reaction L-aspartate 4-semialdehyde + pyruvate = (2S,4S)-4-hydroxy-2,3,4,5-tetrahydrodipicolinate + H2O + H(+). It functions in the pathway amino-acid biosynthesis; L-lysine biosynthesis via DAP pathway; (S)-tetrahydrodipicolinate from L-aspartate: step 3/4. Its function is as follows. Catalyzes the condensation of (S)-aspartate-beta-semialdehyde [(S)-ASA] and pyruvate to 4-hydroxy-tetrahydrodipicolinate (HTPA). This Chloroherpeton thalassium (strain ATCC 35110 / GB-78) protein is 4-hydroxy-tetrahydrodipicolinate synthase.